The chain runs to 184 residues: Photosystem I assembly protein Ycf4 (184 aa).

A run of 2 helical transmembrane segments spans residues 22–42 (FCWAIILFLGSLGFLLIGISS) and 57–77 (ILFFPQGIVMSFYGLAGLFIS).

This sequence belongs to the Ycf4 family.

The protein localises to the plastid. The protein resides in the chloroplast thylakoid membrane. Functionally, seems to be required for the assembly of the photosystem I complex. The chain is Photosystem I assembly protein Ycf4 from Populus trichocarpa (Western balsam poplar).